We begin with the raw amino-acid sequence, 78 residues long: Exodeoxyribonuclease 7 small subunit (78 aa).

The protein belongs to the XseB family. As to quaternary structure, heterooligomer composed of large and small subunits.

It is found in the cytoplasm. The catalysed reaction is Exonucleolytic cleavage in either 5'- to 3'- or 3'- to 5'-direction to yield nucleoside 5'-phosphates.. Its function is as follows. Bidirectionally degrades single-stranded DNA into large acid-insoluble oligonucleotides, which are then degraded further into small acid-soluble oligonucleotides. The protein is Exodeoxyribonuclease 7 small subunit of Pediococcus pentosaceus (strain ATCC 25745 / CCUG 21536 / LMG 10740 / 183-1w).